Consider the following 119-residue polypeptide: UPF0145 protein Ta0182 (119 aa).

Belongs to the UPF0145 family.

The protein is UPF0145 protein Ta0182 of Thermoplasma acidophilum (strain ATCC 25905 / DSM 1728 / JCM 9062 / NBRC 15155 / AMRC-C165).